The sequence spans 131 residues: Putative protein PTGES3L (131 aa).

The CS domain occupies 3 to 91 (RQPARTLWYD…KEKVAWPRLT (89 aa)).

The protein belongs to the p23/wos2 family.

The protein is Putative protein PTGES3L (Ptges3l) of Mus musculus (Mouse).